The chain runs to 484 residues: Ribosome biogenesis protein YTM1 (484 aa).

A ubiquitin-like (UBL) domain region spans residues 11-94 (VKVLFTTTEQ…EKTVTLQYVR (84 aa)). 7 WD repeats span residues 121-160 (SSAG…LATS), 166-204 (GPLC…DHFS), 215-254 (GHRS…APEA), 289-329 (VHSR…VVST), 331-372 (TTSN…AATS), 378-418 (GHIN…PAAG), and 448-484 (GEGV…IISS).

This sequence belongs to the WD repeat WDR12/YTM1 family. As to quaternary structure, component of the NOP7 complex, composed of ERB1, NOP7 and YTM1. The complex is held together by ERB1, which interacts with NOP7 via its N-terminal domain and with YTM1 via a high-affinity interaction between the seven-bladed beta-propeller domains of the 2 proteins. The NOP7 complex associates with the 66S pre-ribosome. Interacts (via UBL domain) with MDN1 (via VWFA/MIDAS domain).

The protein resides in the nucleus. Its subcellular location is the nucleolus. The protein localises to the nucleoplasm. Component of the NOP7 complex, which is required for maturation of the 25S and 5.8S ribosomal RNAs and formation of the 60S ribosome. The protein is Ribosome biogenesis protein YTM1 of Pyricularia oryzae (strain 70-15 / ATCC MYA-4617 / FGSC 8958) (Rice blast fungus).